A 344-amino-acid polypeptide reads, in one-letter code: Heat-inducible transcription repressor HrcA (344 aa).

This sequence belongs to the HrcA family.

Its function is as follows. Negative regulator of class I heat shock genes (grpE-dnaK-dnaJ and groELS operons). Prevents heat-shock induction of these operons. The polypeptide is Heat-inducible transcription repressor HrcA (Geobacillus kaustophilus (strain HTA426)).